Here is a 376-residue protein sequence, read N- to C-terminus: uncharacterized protein (376 aa).

It belongs to the mimivirus R1 family.

This is an uncharacterized protein from Acanthamoeba polyphaga mimivirus (APMV).